The primary structure comprises 588 residues: Tripartite motif-containing protein 29 (588 aa).

Positions 1–66 are disordered; that stretch reads MEAADASRSN…GSALKPGEGR (66 aa). Phosphoserine occurs at positions 21, 28, 58, and 104. Residue Tyr-106 is modified to Phosphotyrosine. The B box-type zinc-finger motif lies at 220–260; the sequence is FEARKCPVHGKTMELFCQTDQTCICYLCMFQEHKNHSTVTV. Cys-225, His-228, Cys-247, and His-252 together coordinate Zn(2+). The stretch at 259 to 352 forms a coiled coil; sequence TVEEAKAEKE…VKVIMDALDE (94 aa). Thr-476 carries the post-translational modification Phosphothreonine. Ser-489 is modified (phosphoserine).

As to quaternary structure, interacts with VIM and HINT1. Interacts with IKBKG/NEMO. Interacts with STING1. In terms of processing, constitutively phosphorylated by PKC on serine/threonine in A431 cells. As to expression, expressed in placenta, prostate and thymus.

The protein localises to the cytoplasm. It is found in the lysosome. Its function is as follows. Plays a crucial role in the regulation of macrophage activation in response to viral or bacterial infections within the respiratory tract. Mechanistically, TRIM29 interacts with IKBKG/NEMO in the lysosome where it induces its 'Lys-48' ubiquitination and subsequent degradation. In turn, the expression of type I interferons and the production of pro-inflammatory cytokines are inhibited. Additionally, induces the 'Lys-48' ubiquitination of STING1 in a similar way, leading to its degradation. This is Tripartite motif-containing protein 29 (TRIM29) from Homo sapiens (Human).